Consider the following 407-residue polypeptide: Shaggy-related protein kinase GSK1 (407 aa).

The segment covering 1–19 (MEAPPGPEPMELDAPPPPA) has biased composition (pro residues). Residues 1 to 21 (MEAPPGPEPMELDAPPPPAAV) form a disordered region. The Protein kinase domain occupies 68–352 (YMAERVVGTG…ALDACAHSFF (285 aa)). ATP is bound by residues 74-82 (VGTGSFGIV) and lysine 97. Residue aspartate 193 is the Proton acceptor of the active site.

It belongs to the protein kinase superfamily. CMGC Ser/Thr protein kinase family. GSK-3 subfamily. As to quaternary structure, interacts with LIC. In terms of tissue distribution, highly expressed in the entire young panicles, spikelets, awns, vascular bundles of palea and lemma, stigma and rachilla. Expressed in root tips, root hairs, lamina joint in the collar region, vascular bundles of coleoptiles.

The enzyme catalyses L-seryl-[protein] + ATP = O-phospho-L-seryl-[protein] + ADP + H(+). The catalysed reaction is L-threonyl-[protein] + ATP = O-phospho-L-threonyl-[protein] + ADP + H(+). Probable serine-threonine kinase that may act as a negative regulator of brassinosteroid (BR) signaling during flower development. May have physiological roles in stress signal-transduction pathways. Phosphorylates LIC in response to BR perception. The polypeptide is Shaggy-related protein kinase GSK1 (Oryza sativa subsp. japonica (Rice)).